Consider the following 83-residue polypeptide: UPF0298 protein SERP0712 (83 aa).

The protein belongs to the UPF0298 family.

Its subcellular location is the cytoplasm. This is UPF0298 protein SERP0712 from Staphylococcus epidermidis (strain ATCC 35984 / DSM 28319 / BCRC 17069 / CCUG 31568 / BM 3577 / RP62A).